Consider the following 522-residue polypeptide: Wax ester synthase/diacylglycerol acyltransferase 4 (522 aa).

Positions 1–12 are enriched in basic and acidic residues; it reads MEIETRPHISGD. The segment at 1–20 is disordered; sequence MEIETRPHISGDEKEEEQPL. Residues 1–205 lie on the Cytoplasmic side of the membrane; sequence MEIETRPHIS…SDSRLLWLVK (205 aa). The active-site Proton acceptor is the His-149. The helical transmembrane segment at 206–226 threads the bilayer; sequence VIWTAVILGLNTVCDALEFIV. The Lumenal segment spans residues 227-522; it reads TTLFVKDTET…QIAGLLYRML (296 aa). N-linked (GlcNAc...) asparagine glycosylation is found at Asn-270 and Asn-409.

It in the N-terminal section; belongs to the long-chain O-acyltransferase family. In terms of tissue distribution, mostly expressed in roots, flowers and siliques.

It localises to the cell membrane. Its subcellular location is the endoplasmic reticulum membrane. It carries out the reaction an acyl-CoA + a 1,2-diacyl-sn-glycerol = a triacyl-sn-glycerol + CoA. It catalyses the reaction a long chain fatty alcohol + a fatty acyl-CoA = a wax ester + CoA. Its pathway is glycerolipid metabolism; triacylglycerol biosynthesis. It functions in the pathway lipid metabolism. Functionally, bifunctional wax ester synthase/diacylglycerol acyltransferase. Involved in cuticular wax biosynthesis. The sequence is that of Wax ester synthase/diacylglycerol acyltransferase 4 from Arabidopsis thaliana (Mouse-ear cress).